We begin with the raw amino-acid sequence, 697 residues long: MLIKSLVQKNQVYFTNNSLDEKNICDLSKLKINQPIVHFEHGVGRYQGLTTVTTRNIKTECVVINYAQNSKLYVPITYLYLISRYIGTSKKDIPLHRLGNDLWNKEKKKANEKAYDSAAILLNIYSHRISQKGFSFKKHHTKYKIFCERFPFTLTPDQDSAINSVLSDMYKSTPMDRLVCGDVGFGKTEVAMRATFLAVCNQKQVAILVPTTLLAQQHFNNFTLRFKYWSTKIEILSRFQSETKCNEIINNVNIGNVHVLIGTHKILLKNLKWKNLGLLIVDEEHRFGVHHKEQIKLISNNIDVLTLTATPIPRTLNMAFVGIRDLSIIATPPKQRLIVKTFVREFSYTVIRKAILREILRGGQVYYIYNNVNKIERKKIELKKLVPEANIRIGHGQLRSTDLESIMNDFYHKRFNVLVCSTIIETGIDIPNVNTIIIENANNFGLAQLHQLRGRVGRSQHQAYAWLLVPSLKDIKSDAKKRIDAITSIESFGSCFELANRDLEIRGIGEILGNNQSGHITKIGFSLYMKLLMNAVRNIKNGYYKPLNDIINTYPKIELNVSNLLPDSYIKKVNHRLFFYNKIATSNNFLDLEKIRLTLCKNFGNLPNSGDYLIKIAKIRLISKKIGVKKIKSDVKGGYIEFFEDSKINIQNLLKEFKKEKNCWKFDTSNRLRFSKNFKNNSERIDWILNMLININN.

One can recognise a Helicase ATP-binding domain in the interval 168–329; that stretch reads DMYKSTPMDR…FVGIRDLSII (162 aa). Residue 181-188 participates in ATP binding; the sequence is GDVGFGKT. The DEEH box motif lies at 282 to 285; that stretch reads DEEH. A Helicase C-terminal domain is found at 350-504; the sequence is VIRKAILREI…CFELANRDLE (155 aa).

In the N-terminal section; belongs to the UvrB family. It in the C-terminal section; belongs to the helicase family. RecG subfamily.

The protein resides in the cytoplasm. Its function is as follows. Couples transcription and DNA repair by recognizing RNA polymerase (RNAP) stalled at DNA lesions. Mediates ATP-dependent release of RNAP and its truncated transcript from the DNA, and recruitment of nucleotide excision repair machinery to the damaged site. This chain is Transcription-repair-coupling factor (mfd), found in Buchnera aphidicola subsp. Baizongia pistaciae (strain Bp).